A 373-amino-acid polypeptide reads, in one-letter code: Chaperone protein DnaJ (373 aa).

Residues 4 to 68 (NYYQILGVSK…QKRAAYDRLG (65 aa)) enclose the J domain. The segment at 136–214 (GIEKNISFSS…CHGMGRYHKQ (79 aa)) adopts a CR-type zinc-finger fold. The Zn(2+) site is built by Cys149, Cys152, Cys166, Cys169, Cys188, Cys191, Cys202, and Cys205. CXXCXGXG motif repeat units lie at residues 149–156 (CDTCHGSG), 166–173 (CDACSGVG), 188–195 (CHKCQGNG), and 202–209 (CKKCHGMG).

It belongs to the DnaJ family. As to quaternary structure, homodimer. The cofactor is Zn(2+).

The protein localises to the cytoplasm. In terms of biological role, participates actively in the response to hyperosmotic and heat shock by preventing the aggregation of stress-denatured proteins and by disaggregating proteins, also in an autonomous, DnaK-independent fashion. Unfolded proteins bind initially to DnaJ; upon interaction with the DnaJ-bound protein, DnaK hydrolyzes its bound ATP, resulting in the formation of a stable complex. GrpE releases ADP from DnaK; ATP binding to DnaK triggers the release of the substrate protein, thus completing the reaction cycle. Several rounds of ATP-dependent interactions between DnaJ, DnaK and GrpE are required for fully efficient folding. Also involved, together with DnaK and GrpE, in the DNA replication of plasmids through activation of initiation proteins. This chain is Chaperone protein DnaJ, found in Rickettsia africae (strain ESF-5).